The sequence spans 112 residues: uncharacterized protein (112 aa).

Positions 1–29 (MINLHRLCIIHVVATLLSTLLSLISVAIS) are cleaved as a signal peptide. Residue Asn-84 is glycosylated (N-linked (GlcNAc...) asparagine). The interval 84–112 (NLSKGYNQRPEGSKEESHMVVKEKRKGDH) is disordered. Residues 94–112 (EGSKEESHMVVKEKRKGDH) are compositionally biased toward basic and acidic residues.

The protein resides in the secreted. This is an uncharacterized protein from Homo sapiens (Human).